A 666-amino-acid polypeptide reads, in one-letter code: DNA ligase (666 aa).

Residues 31–35, 80–81, and glutamate 111 contribute to the NAD(+) site; these read DYDFD and SL. Residue lysine 113 is the N6-AMP-lysine intermediate of the active site. NAD(+) is bound by residues arginine 134, glutamate 170, lysine 285, and lysine 309. The Zn(2+) site is built by cysteine 403, cysteine 406, cysteine 421, and cysteine 427. One can recognise a BRCT domain in the interval 587-666; that stretch reads VVSNKLLGKI…ESDFSALLTS (80 aa).

This sequence belongs to the NAD-dependent DNA ligase family. LigA subfamily. The cofactor is Mg(2+). Requires Mn(2+) as cofactor.

The enzyme catalyses NAD(+) + (deoxyribonucleotide)n-3'-hydroxyl + 5'-phospho-(deoxyribonucleotide)m = (deoxyribonucleotide)n+m + AMP + beta-nicotinamide D-nucleotide.. Functionally, DNA ligase that catalyzes the formation of phosphodiester linkages between 5'-phosphoryl and 3'-hydroxyl groups in double-stranded DNA using NAD as a coenzyme and as the energy source for the reaction. It is essential for DNA replication and repair of damaged DNA. The chain is DNA ligase from Flavobacterium psychrophilum (strain ATCC 49511 / DSM 21280 / CIP 103535 / JIP02/86).